Here is a 426-residue protein sequence, read N- to C-terminus: Adenylosuccinate synthetase (426 aa).

GTP-binding positions include glycine 14–lysine 20 and glycine 42–threonine 44. Aspartate 15 acts as the Proton acceptor in catalysis. Mg(2+)-binding residues include aspartate 15 and glycine 42. IMP contacts are provided by residues aspartate 15 to lysine 18, asparagine 40 to histidine 43, threonine 130, arginine 144, glutamine 224, threonine 239, and arginine 303. Histidine 43 serves as the catalytic Proton donor. Threonine 299–arginine 305 is a binding site for substrate. GTP contacts are provided by residues arginine 305, leucine 331 to aspartate 333, and serine 413 to glycine 415.

It belongs to the adenylosuccinate synthetase family. Homodimer. Mg(2+) is required as a cofactor.

Its subcellular location is the cytoplasm. It carries out the reaction IMP + L-aspartate + GTP = N(6)-(1,2-dicarboxyethyl)-AMP + GDP + phosphate + 2 H(+). The protein operates within purine metabolism; AMP biosynthesis via de novo pathway; AMP from IMP: step 1/2. In terms of biological role, plays an important role in the de novo pathway of purine nucleotide biosynthesis. Catalyzes the first committed step in the biosynthesis of AMP from IMP. The polypeptide is Adenylosuccinate synthetase (Malacoplasma penetrans (strain HF-2) (Mycoplasma penetrans)).